A 161-amino-acid chain; its full sequence is Insulin-like growth factor 1, juvenile form (161 aa).

The b stretch occupies residues 45–73; the sequence is GPETLCGAELVDTLQFVCGDRGFYFSKPT. 3 disulfides stabilise this stretch: Cys50-Cys92, Cys62-Cys105, and Cys91-Cys96. Residues 74–85 are c; it reads GYGPSSRRSHNR. An a region spans residues 86-106; sequence GIVDECCFQSCELRRLEMYCA. The tract at residues 107–114 is d; the sequence is PVKPGKTP. The tract at residues 111–161 is disordered; the sequence is GKTPRSVRAQRHTDSPRTAKKPLPGQSHSSYKEVHQKNSSRGNTGGRNYRI. The propeptide at 115-161 is e peptide; sequence RSVRAQRHTDSPRTAKKPLPGQSHSSYKEVHQKNSSRGNTGGRNYRI.

Belongs to the insulin family.

The protein localises to the secreted. Its function is as follows. The insulin-like growth factors, isolated from plasma, are structurally and functionally related to insulin but have a much higher growth-promoting activity. Acts as a ligand for IGF1R. Binds to the alpha subunit of IGF1R, leading to the activation of the intrinsic tyrosine kinase activity which autophosphorylates tyrosine residues in the beta subunit thus initiatiating a cascade of down-stream signaling events leading to activation of the PI3K-AKT/PKB and the Ras-MAPK pathways. Binds to integrins. Its binding to integrins and subsequent ternary complex formation with integrins and IGFR1 are essential for IGF1 signaling. The protein is Insulin-like growth factor 1, juvenile form of Cyprinus carpio (Common carp).